Consider the following 196-residue polypeptide: Guanylate kinase (196 aa).

In terms of domain architecture, Guanylate kinase-like spans 8–189; that stretch reads GKIIIISGPS…AADKLRHILY (182 aa). Residue 15-22 coordinates ATP; sequence GPSGVGKK.

The protein belongs to the guanylate kinase family.

It is found in the cytoplasm. It carries out the reaction GMP + ATP = GDP + ADP. Essential for recycling GMP and indirectly, cGMP. The polypeptide is Guanylate kinase (Malacoplasma penetrans (strain HF-2) (Mycoplasma penetrans)).